The sequence spans 223 residues: Ribonuclease 3 (223 aa).

The RNase III domain occupies L4 to G127. A Mg(2+)-binding site is contributed by E40. D44 is a catalytic residue. Positions 113 and 116 each coordinate Mg(2+). Residue E116 is part of the active site. In terms of domain architecture, DRBM spans D154–K223.

Belongs to the ribonuclease III family. In terms of assembly, homodimer. Requires Mg(2+) as cofactor.

The protein localises to the cytoplasm. It catalyses the reaction Endonucleolytic cleavage to 5'-phosphomonoester.. In terms of biological role, digests double-stranded RNA. Involved in the processing of primary rRNA transcript to yield the immediate precursors to the large and small rRNAs (23S and 16S). Processes some mRNAs, and tRNAs when they are encoded in the rRNA operon. Processes pre-crRNA and tracrRNA of type II CRISPR loci if present in the organism. The chain is Ribonuclease 3 from Campylobacter curvus (strain 525.92).